The chain runs to 592 residues: Threonine--tRNA ligase (592 aa).

The catalytic stretch occupies residues 193–488; that stretch reads DHRKLGPALG…LIEHYGGAFP (296 aa). Residues Cys-284, His-335, and His-465 each coordinate Zn(2+).

Belongs to the class-II aminoacyl-tRNA synthetase family. As to quaternary structure, homodimer. The cofactor is Zn(2+).

It is found in the cytoplasm. The enzyme catalyses tRNA(Thr) + L-threonine + ATP = L-threonyl-tRNA(Thr) + AMP + diphosphate + H(+). Functionally, catalyzes the attachment of threonine to tRNA(Thr) in a two-step reaction: L-threonine is first activated by ATP to form Thr-AMP and then transferred to the acceptor end of tRNA(Thr). Also edits incorrectly charged L-seryl-tRNA(Thr). In Treponema pallidum (strain Nichols), this protein is Threonine--tRNA ligase.